The sequence spans 300 residues: Acetylglutamate kinase (300 aa).

Residues 68–69 (GG), arginine 90, and asparagine 194 contribute to the substrate site.

It belongs to the acetylglutamate kinase family. ArgB subfamily.

It localises to the cytoplasm. The catalysed reaction is N-acetyl-L-glutamate + ATP = N-acetyl-L-glutamyl 5-phosphate + ADP. Its pathway is amino-acid biosynthesis; L-arginine biosynthesis; N(2)-acetyl-L-ornithine from L-glutamate: step 2/4. In terms of biological role, catalyzes the ATP-dependent phosphorylation of N-acetyl-L-glutamate. The sequence is that of Acetylglutamate kinase from Methanocaldococcus jannaschii (strain ATCC 43067 / DSM 2661 / JAL-1 / JCM 10045 / NBRC 100440) (Methanococcus jannaschii).